Consider the following 508-residue polypeptide: Photosystem II CP47 reaction center protein (508 aa).

The next 6 helical transmembrane spans lie at 21–36 (AVHIMHTALVSGWAGS), 101–115 (IVFSGLCFLAAIWHW), 140–156 (GIHLFLSGAACFGFGAF), 203–218 (IAAGILGILAGLFHLS), 237–252 (VLSSSIAAVFFAAFIV), and 457–472 (TFALLFFFGHIWHGAR).

The protein belongs to the PsbB/PsbC family. PsbB subfamily. In terms of assembly, PSII is composed of 1 copy each of membrane proteins PsbA, PsbB, PsbC, PsbD, PsbE, PsbF, PsbH, PsbI, PsbJ, PsbK, PsbL, PsbM, PsbT, PsbX, PsbY, PsbZ, Psb30/Ycf12, at least 3 peripheral proteins of the oxygen-evolving complex and a large number of cofactors. It forms dimeric complexes. Binds multiple chlorophylls. PSII binds additional chlorophylls, carotenoids and specific lipids. serves as cofactor.

The protein localises to the plastid. It localises to the chloroplast thylakoid membrane. Its function is as follows. One of the components of the core complex of photosystem II (PSII). It binds chlorophyll and helps catalyze the primary light-induced photochemical processes of PSII. PSII is a light-driven water:plastoquinone oxidoreductase, using light energy to abstract electrons from H(2)O, generating O(2) and a proton gradient subsequently used for ATP formation. In Cryptomeria japonica (Japanese cedar), this protein is Photosystem II CP47 reaction center protein.